A 75-amino-acid polypeptide reads, in one-letter code: MPRPKPDDRSDNVEKLQEMVQNTIENIQKAEETMQFASPEEQEKIRAKNRRREEAIAAMRAEIRDEAAAREHGCQ.

It belongs to the Tlp family.

The protein localises to the spore core. The polypeptide is Small, acid-soluble spore protein Tlp (Geobacillus kaustophilus (strain HTA426)).